The sequence spans 355 residues: Probable protein phosphatase 2C 21 (355 aa).

The PPM-type phosphatase domain maps to 23–329 (RFGLSSMQGW…DNMTIILVQF (307 aa)). Residues aspartate 57, glycine 58, aspartate 272, and aspartate 320 each coordinate Mn(2+). Positions 329 to 355 (FKKPNPSETEPEDSKPEPSEDEPSSSS) are disordered.

Belongs to the PP2C family. Mg(2+) serves as cofactor. Mn(2+) is required as a cofactor.

The catalysed reaction is O-phospho-L-seryl-[protein] + H2O = L-seryl-[protein] + phosphate. The enzyme catalyses O-phospho-L-threonyl-[protein] + H2O = L-threonyl-[protein] + phosphate. This chain is Probable protein phosphatase 2C 21 (PPC4-2), found in Arabidopsis thaliana (Mouse-ear cress).